Reading from the N-terminus, the 365-residue chain is MSMEEAEECSAACGFSLTCQEDGADLGDGVVDDDDDGDVFLFYNAVAAADDEEEEEEYVEQMVSKEASFCCSSSSSLFDAAAGDGYGDGDGDGDWFRQARLAAVKWILETRGYFGFGHRTAYLAIAYFDRFCLRRRVDREAMPWAARLLSIACVSVAAKMEEYQSPALSEFDAGGGRVFCSDSIRRMELLVLSTLGWRMGAVTPFDFLPCFSSRLHRHHHGGAGAAGHGAAAAARVALNAVGFIFATAEAGSVLDYRPSTVAAAAILAASYGAPLTKEALESKMSNLSPSCLIDKENVHACYSMMVGDMNNNRRSSKRPLQCSDSNEITTTSTYDSVLVDDVTDTAAFAATAMNKRLRPEPPRIR.

Belongs to the cyclin family. Cyclin D subfamily.

The protein is Cyclin-D5-2 (CYCD5-2) of Oryza sativa subsp. japonica (Rice).